The sequence spans 437 residues: Beta-1,3-galactosyl-O-glycosyl-glycoprotein beta-1,6-N-acetylglucosaminyltransferase 3 (437 aa).

Topologically, residues 1–6 are cytoplasmic; sequence MVSWRR. A helical; Signal-anchor for type II membrane protein membrane pass occupies residues 7–27; it reads FCWHYHGWTLGCYMLLAIIAL. Topologically, residues 28-437 are lumenal; it reads KLSLRLKCDF…RHKAIYGTEL (410 aa). 4 cysteine pairs are disulfide-bonded: cysteine 70–cysteine 227, cysteine 161–cysteine 381, cysteine 182–cysteine 209, and cysteine 390–cysteine 422. Residue asparagine 288 is glycosylated (N-linked (GlcNAc...) asparagine).

The protein belongs to the glycosyltransferase 14 family. In terms of processing, N-glycosylated.

Its subcellular location is the golgi apparatus membrane. It carries out the reaction a 3-O-[beta-D-galactosyl-(1-&gt;3)-N-acetyl-alpha-D-galactosaminyl]-L-seryl-[protein] + UDP-N-acetyl-alpha-D-glucosamine = 3-O-{beta-D-galactosyl-(1-&gt;3)-[N-acetyl-beta-D-glucosaminyl-(1-&gt;6)]-N-acetyl-alpha-D-galactosaminyl}-L-seryl-[protein] + UDP + H(+). It catalyses the reaction a 3-O-[beta-D-galactosyl-(1-&gt;3)-N-acetyl-alpha-D-galactosaminyl]-L-threonyl-[protein] + UDP-N-acetyl-alpha-D-glucosamine = a 3-O-{beta-D-galactosyl-(1-&gt;3)-[N-acetyl-beta-D-glucosaminyl-(1-&gt;6)]-N-acetyl-alpha-D-galactosaminyl}-L-threonyl-[protein] + UDP + H(+). The catalysed reaction is a beta-D-Gal-(1-&gt;4)-beta-D-GlcNAc-(1-&gt;3)-beta-D-Gal-(1-&gt;4)-beta-D-GlcNAc derivative + UDP-N-acetyl-alpha-D-glucosamine = a beta-D-Gal-(1-&gt;4)-beta-D-GlcNAc-(1-&gt;3)-[beta-D-GlcNAc-(1-&gt;6)]-beta-D-Gal-(1-&gt;4)-N-acetyl-beta-D-glucosaminyl derivative + UDP + H(+). The enzyme catalyses 3-O-[N-acetyl-beta-D-glucosaminyl-(1-&gt;3)-N-acetyl-alpha-D-galactosaminyl]-L-seryl-[protein] + UDP-N-acetyl-alpha-D-glucosamine = 3-O-[N-acetyl-beta-D-glucosaminyl-(1-&gt;3)-[N-acetyl-beta-D-glucosaminyl-(1-&gt;6)]-N-acetyl-alpha-D-galactosaminyl]-L-seryl-[protein] + UDP + H(+). It carries out the reaction a 3-O-[N-acetyl-beta-D-glucosaminyl-(1-&gt;3)-N-acetyl-alpha-D-galactosaminyl]-L-threonyl-[protein] + UDP-N-acetyl-alpha-D-glucosamine = 3-O-[N-acetyl-beta-D-glucosaminyl-(1-&gt;3)-[N-acetyl-beta-D-glucosaminyl-(1-&gt;6)]-N-acetyl-alpha-D-galactosaminyl]-L-threonyl-[protein] + UDP + H(+). The protein operates within protein modification; protein glycosylation. Functionally, glycosyltransferase that can synthesize all known mucin beta 6 N-acetylglucosaminides. Mediates core 2 and core 4 O-glycan branching, 2 important steps in mucin-type biosynthesis. Also has I-branching enzyme activity by converting linear into branched poly-N-acetyllactosaminoglycans, leading to introduce the blood group I antigen during embryonic development. This Rattus norvegicus (Rat) protein is Beta-1,3-galactosyl-O-glycosyl-glycoprotein beta-1,6-N-acetylglucosaminyltransferase 3 (Gcnt3).